The following is a 428-amino-acid chain: UPF0597 protein Dde_0807 (428 aa).

Belongs to the UPF0597 family.

This chain is UPF0597 protein Dde_0807, found in Oleidesulfovibrio alaskensis (strain ATCC BAA-1058 / DSM 17464 / G20) (Desulfovibrio alaskensis).